Here is a 278-residue protein sequence, read N- to C-terminus: HTH-type transcriptional activator RhaS (278 aa).

In terms of domain architecture, HTH araC/xylS-type spans 174–272 (NQLMAWLEDH…NWSPRDIRQG (99 aa)). 2 consecutive DNA-binding regions (H-T-H motif) follow at residues 191–212 (EAVA…KQHT) and 239–262 (VTEI…RREF).

In terms of assembly, binds DNA as a dimer.

The protein resides in the cytoplasm. Functionally, activates expression of the rhaBAD and rhaT operons. This is HTH-type transcriptional activator RhaS from Salmonella enteritidis PT4 (strain P125109).